The primary structure comprises 179 residues: Large ribosomal subunit protein uL5 (179 aa).

This sequence belongs to the universal ribosomal protein uL5 family. Part of the 50S ribosomal subunit; part of the 5S rRNA/L5/L18/L25 subcomplex. Contacts the 5S rRNA and the P site tRNA. Forms a bridge to the 30S subunit in the 70S ribosome.

This is one of the proteins that bind and probably mediate the attachment of the 5S RNA into the large ribosomal subunit, where it forms part of the central protuberance. In the 70S ribosome it contacts protein S13 of the 30S subunit (bridge B1b), connecting the 2 subunits; this bridge is implicated in subunit movement. Contacts the P site tRNA; the 5S rRNA and some of its associated proteins might help stabilize positioning of ribosome-bound tRNAs. The chain is Large ribosomal subunit protein uL5 from Prochlorococcus marinus (strain MIT 9312).